Consider the following 667-residue polypeptide: Bifunctional polymyxin resistance protein ArnA (667 aa).

Positions 1–304 are formyltransferase ArnAFT; that stretch reads MKAIVFAYHD…EMGIVTDVRL (304 aa). H104 acts as the Proton donor; for formyltransferase activity in catalysis. (6R)-10-formyltetrahydrofolate contacts are provided by residues R114 and 136–140; that span reads VKKAD. Residues 314 to 667 form a dehydrogenase ArnADH region; that stretch reads RRTRVLILGV…TAAPKDELNA (354 aa). NAD(+)-binding positions include D347 and 368–369; that span reads DI. Residues A393, Y398, and 432 to 433 each bind UDP-alpha-D-glucuronate; that span reads TS. The Proton acceptor; for decarboxylase activity role is filled by E434. Residues R460, N492, 526 to 535, and Y613 each bind UDP-alpha-D-glucuronate; that span reads KLVDGGAQKR. R619 acts as the Proton donor; for decarboxylase activity in catalysis.

This sequence in the N-terminal section; belongs to the Fmt family. UDP-L-Ara4N formyltransferase subfamily. The protein in the C-terminal section; belongs to the NAD(P)-dependent epimerase/dehydratase family. UDP-glucuronic acid decarboxylase subfamily. As to quaternary structure, homohexamer, formed by a dimer of trimers.

It catalyses the reaction UDP-alpha-D-glucuronate + NAD(+) = UDP-beta-L-threo-pentopyranos-4-ulose + CO2 + NADH. The catalysed reaction is UDP-4-amino-4-deoxy-beta-L-arabinose + (6R)-10-formyltetrahydrofolate = UDP-4-deoxy-4-formamido-beta-L-arabinose + (6S)-5,6,7,8-tetrahydrofolate + H(+). Its pathway is nucleotide-sugar biosynthesis; UDP-4-deoxy-4-formamido-beta-L-arabinose biosynthesis; UDP-4-deoxy-4-formamido-beta-L-arabinose from UDP-alpha-D-glucuronate: step 1/3. It functions in the pathway nucleotide-sugar biosynthesis; UDP-4-deoxy-4-formamido-beta-L-arabinose biosynthesis; UDP-4-deoxy-4-formamido-beta-L-arabinose from UDP-alpha-D-glucuronate: step 3/3. The protein operates within bacterial outer membrane biogenesis; lipopolysaccharide biosynthesis. Functionally, bifunctional enzyme that catalyzes the oxidative decarboxylation of UDP-glucuronic acid (UDP-GlcUA) to UDP-4-keto-arabinose (UDP-Ara4O) and the addition of a formyl group to UDP-4-amino-4-deoxy-L-arabinose (UDP-L-Ara4N) to form UDP-L-4-formamido-arabinose (UDP-L-Ara4FN). The modified arabinose is attached to lipid A and is required for resistance to polymyxin and cationic antimicrobial peptides. The chain is Bifunctional polymyxin resistance protein ArnA from Yersinia pseudotuberculosis serotype O:3 (strain YPIII).